We begin with the raw amino-acid sequence, 548 residues long: Calcium-transporting ATPase (548 aa).

Residues 1–21 (MNFKSTVITAMCCFFSFAVLA) form the signal peptide. The a divalent metal cation site is built by Asp37 and Thr78. Thr78 serves as the catalytic Phosphothreonine intermediate. Substrate is bound by residues Asn99 and 160–162 (KDR). An ATP-binding motif is present at residues 179–187 (DGKTGDWIT). Positions 305, 309, 352, 353, and 488 each coordinate a divalent metal cation.

It depends on Mg(2+) as a cofactor.

It localises to the cell inner membrane. It carries out the reaction Ca(2+)(in) + ATP + H2O = Ca(2+)(out) + ADP + phosphate + H(+). Its activity is regulated as follows. Completely inhibited by vanadate(3-). Also inhibited by lanthanoid atom and phosphate. Not inhibited by N-ethylmaleimide, 1,3-dicyclohexylcarbodiimide, oligomycin, ouabain, valinomycin, nigericin, thapsigargin, cyclopiazonic acid or fluorescein isothiocyanate. Catalyzes the hydrolysis of ATP coupled with the transport of calcium. Has some hydrolysis activity also with dATP, GTP, UTP, ITP and 4-nitrophenyl phosphate as substrate. No activity with ADP, CTP, acetyl dihydrogen phosphate or AMP-PNP as substrate. The sequence is that of Calcium-transporting ATPase from Myroides odoratus (Flavobacterium odoratum).